Reading from the N-terminus, the 99-residue chain is Aspartyl/glutamyl-tRNA(Asn/Gln) amidotransferase subunit C (99 aa).

Belongs to the GatC family. As to quaternary structure, heterotrimer of A, B and C subunits.

It catalyses the reaction L-glutamyl-tRNA(Gln) + L-glutamine + ATP + H2O = L-glutaminyl-tRNA(Gln) + L-glutamate + ADP + phosphate + H(+). It carries out the reaction L-aspartyl-tRNA(Asn) + L-glutamine + ATP + H2O = L-asparaginyl-tRNA(Asn) + L-glutamate + ADP + phosphate + 2 H(+). In terms of biological role, allows the formation of correctly charged Asn-tRNA(Asn) or Gln-tRNA(Gln) through the transamidation of misacylated Asp-tRNA(Asn) or Glu-tRNA(Gln) in organisms which lack either or both of asparaginyl-tRNA or glutaminyl-tRNA synthetases. The reaction takes place in the presence of glutamine and ATP through an activated phospho-Asp-tRNA(Asn) or phospho-Glu-tRNA(Gln). This chain is Aspartyl/glutamyl-tRNA(Asn/Gln) amidotransferase subunit C, found in Sulfurihydrogenibium sp. (strain YO3AOP1).